Here is a 496-residue protein sequence, read N- to C-terminus: MVEADHPGKLFIGGLNRETNEKMLKAVFGKHGPISEVLLIKDRTSKSRGFAFITFENPADAKNAAKDMNGTSLHGKAIKVEQAKKPSFQSGGRRRPPASSRNRSPSGSLRSARGSSGGTRGWLPSHEGHLDDGGYTPDLKMSYSRGLIPVKRGPSSRSGGPPPKKSAPSAVARSNSWMGSQGPMSQRRENYGVPPRRATISSWRNDRMSTRHDGYATNDGNHPSCQETRDYAPPSRGYAYRDNGHSNRDEHSSRGYRNHRSSRETRDYAPPSRGHAYRDYGHSRRDESYSRGYRNHRSSRETREYAPPSRGHGYRDYGHSRRHESYSRGYRNHPSSRETRDYAPPHRDYAYRDYGHSSWDEHSSRGYSYHDGYGEALGRDHSEHLSGSSYRDALQRYGTSHGAPPARGPRMSYGGSTCHAYSNTRDRYGRSWESYSSCGDFHYCDREHVCRKDQRNPPSLGRVLPDPREAYGSSSYVASIVDGGESRSEKGDSSRY.

Residues 8–85 (GKLFIGGLNR…KAIKVEQAKK (78 aa)) form the RRM domain. 2 disordered regions span residues 81–345 (EQAK…YAPP) and 452–496 (KDQR…SSRY). Low complexity-rich tracts occupy residues 97-114 (PASS…SARG) and 149-159 (PVKRGPSSRSG). Positions 175–184 (NSWMGSQGPM) are enriched in polar residues. Basic and acidic residues-rich tracts occupy residues 204–214 (RNDRMSTRHDG), 242–253 (DNGHSNRDEHSS), 276–289 (AYRD…DESY), 313–326 (GYRD…HESY), 335–345 (SSRETRDYAPP), and 484–496 (GESR…SSRY).

As to quaternary structure, interacts with splicing factor proteins SFRS3/SRP20, TRA2B/SFRS10, KHDRBS1/SAM68 and KHDRBS3. Testis-specific.

It localises to the nucleus. RNA-binding protein which may be involved in spermatogenesis. Required for sperm development, possibly by participating in pre-mRNA splicing in the testis. The sequence is that of RNA-binding motif protein, Y chromosome, family 1 member F/J (RBMY1F) from Homo sapiens (Human).